The sequence spans 112 residues: uncharacterized protein (112 aa).

The N-terminal stretch at 1–21 is a signal peptide; sequence MKTLFTSVVLCGALVVSSSFA. 2 consecutive HhH domains span residues 49–79 and 80–109; these read DKLNINTATASEIQKSLTGIGAKKAEAIVQY and REKHGNFXNAEQLLEVQGIGKATLEKNRDR.

This is an uncharacterized protein from Haemophilus influenzae (strain ATCC 51907 / DSM 11121 / KW20 / Rd).